Consider the following 403-residue polypeptide: S-adenosylmethionine synthase (403 aa).

His17 serves as a coordination point for ATP. Residue Asp19 participates in Mg(2+) binding. Glu45 is a K(+) binding site. L-methionine contacts are provided by Glu58 and Gln104. The tract at residues 104–114 (QSPDIAQGVDT) is flexible loop. ATP is bound by residues 179–181 (DGK), 250–251 (KF), Asp259, 265–266 (RK), Ala282, and Lys286. Asp259 provides a ligand contact to L-methionine. Residue Lys290 coordinates L-methionine.

It belongs to the AdoMet synthase family. As to quaternary structure, homotetramer; dimer of dimers. Mg(2+) is required as a cofactor. The cofactor is K(+).

It localises to the cytoplasm. It catalyses the reaction L-methionine + ATP + H2O = S-adenosyl-L-methionine + phosphate + diphosphate. It participates in amino-acid biosynthesis; S-adenosyl-L-methionine biosynthesis; S-adenosyl-L-methionine from L-methionine: step 1/1. Its function is as follows. Catalyzes the formation of S-adenosylmethionine (AdoMet) from methionine and ATP. The overall synthetic reaction is composed of two sequential steps, AdoMet formation and the subsequent tripolyphosphate hydrolysis which occurs prior to release of AdoMet from the enzyme. The chain is S-adenosylmethionine synthase from Mycobacterium ulcerans (strain Agy99).